Reading from the N-terminus, the 277-residue chain is Carbonyl reductase [NADPH] 1 (277 aa).

An N-acetylserine modification is found at Ser2. Phosphoserine occurs at positions 2 and 30. NADP(+)-binding positions include 10–34 (VTGG…GDVV), 63–64 (DI), and Asn90. Glutathione is bound by residues 95 to 97 (FKV) and Gln106. Ser140 lines the substrate pocket. 193–194 (AY) provides a ligand contact to glutathione. Residue Tyr194 is the Proton acceptor of the active site. NADP(+)-binding positions include 194-198 (YGVTK) and 231-233 (VRT). The residue at position 239 (Lys239) is an N6-1-carboxyethyl lysine.

This sequence belongs to the short-chain dehydrogenases/reductases (SDR) family. In terms of assembly, monomer. Expressed in kidney (at protein level).

Its subcellular location is the cytoplasm. The enzyme catalyses a secondary alcohol + NADP(+) = a ketone + NADPH + H(+). The catalysed reaction is a primary alcohol + NADP(+) = an aldehyde + NADPH + H(+). It carries out the reaction prostaglandin F2alpha + NADP(+) = prostaglandin E2 + NADPH + H(+). It catalyses the reaction prostaglandin E1 + NADP(+) = 15-oxoprostaglandin E1 + NADPH + H(+). The enzyme catalyses menadione + NADPH + H(+) = menadiol + NADP(+). The catalysed reaction is prostaglandin D2 + NADP(+) = 15-oxoprostaglandin D2 + NADPH + H(+). It carries out the reaction prostaglandin E2 + NADP(+) = 15-oxoprostaglandin E2 + NADPH + H(+). It catalyses the reaction prostaglandin F2alpha + NADP(+) = 15-oxoprostaglandin F2alpha + NADPH + H(+). The enzyme catalyses daunorubicin + NADPH + H(+) = 13-dihydrodaunorubicin + NADP(+). The catalysed reaction is S-nitrosoglutathione + NADPH + H(+) = S-(hydroxysulfenamide)glutathione + NADP(+). It carries out the reaction cortisol + NADPH + H(+) = 20beta-dihydrocortisol + NADP(+). It catalyses the reaction corticosterone + NADPH + H(+) = 20beta-dihydrocorticosterone + NADP(+). Inhibited by quercetin, rutenin and its derivatives. NADPH-dependent reductase with broad substrate specificity. Catalyzes the reduction of a wide variety of carbonyl compounds including quinones, prostaglandins, menadione, plus various xenobiotics. Catalyzes the reduction of the antitumor anthracyclines doxorubicin and daunorubicin to the cardiotoxic compounds doxorubicinol and daunorubicinol. Can convert prostaglandin E to prostaglandin F2-alpha. Can bind glutathione, which explains its higher affinity for glutathione-conjugated substrates. Catalyzes the reduction of S-nitrosoglutathione. In addition, participates in the glucocorticoid metabolism by catalyzing the NADPH-dependent cortisol/corticosterone into 20beta-dihydrocortisol (20b-DHF) or 20beta-corticosterone (20b-DHB), which are weak agonists of NR3C1 and NR3C2 in adipose tissue. This chain is Carbonyl reductase [NADPH] 1, found in Homo sapiens (Human).